Reading from the N-terminus, the 249-residue chain is 3-deoxy-manno-octulosonate cytidylyltransferase (249 aa).

This sequence belongs to the KdsB family.

Its subcellular location is the cytoplasm. It catalyses the reaction 3-deoxy-alpha-D-manno-oct-2-ulosonate + CTP = CMP-3-deoxy-beta-D-manno-octulosonate + diphosphate. The protein operates within nucleotide-sugar biosynthesis; CMP-3-deoxy-D-manno-octulosonate biosynthesis; CMP-3-deoxy-D-manno-octulosonate from 3-deoxy-D-manno-octulosonate and CTP: step 1/1. Its pathway is bacterial outer membrane biogenesis; lipopolysaccharide biosynthesis. In terms of biological role, activates KDO (a required 8-carbon sugar) for incorporation into bacterial lipopolysaccharide in Gram-negative bacteria. The polypeptide is 3-deoxy-manno-octulosonate cytidylyltransferase (Aliivibrio fischeri (strain ATCC 700601 / ES114) (Vibrio fischeri)).